The following is a 529-amino-acid chain: Phosphoenolpyruvate carboxykinase (ATP) (529 aa).

Arg-60, Tyr-195, and Lys-201 together coordinate substrate. ATP contacts are provided by residues Lys-201, His-220, and 236–244; that span reads GLSGTGKTT. Residues Lys-201 and His-220 each coordinate Mn(2+). A Mn(2+)-binding site is contributed by Asp-257. Glu-285, Arg-323, and Ser-448 together coordinate ATP. Arg-323 contributes to the substrate binding site.

This sequence belongs to the phosphoenolpyruvate carboxykinase (ATP) family. It depends on Mn(2+) as a cofactor.

The protein resides in the cytoplasm. The enzyme catalyses oxaloacetate + ATP = phosphoenolpyruvate + ADP + CO2. It functions in the pathway carbohydrate biosynthesis; gluconeogenesis. Functionally, involved in the gluconeogenesis. Catalyzes the conversion of oxaloacetate (OAA) to phosphoenolpyruvate (PEP) through direct phosphoryl transfer between the nucleoside triphosphate and OAA. The protein is Phosphoenolpyruvate carboxykinase (ATP) of Geobacter sp. (strain M21).